Reading from the N-terminus, the 163-residue chain is Large ribosomal subunit protein uL15 (163 aa).

It belongs to the universal ribosomal protein uL15 family. As to quaternary structure, part of the 50S ribosomal subunit.

Binds to the 23S rRNA. This is Large ribosomal subunit protein uL15 from Orientia tsutsugamushi (strain Ikeda) (Rickettsia tsutsugamushi).